A 508-amino-acid chain; its full sequence is UDP-N-acetylmuramoyl-L-alanyl-D-glutamate--2,6-diaminopimelate ligase (508 aa).

A UDP-N-acetyl-alpha-D-muramoyl-L-alanyl-D-glutamate-binding site is contributed by S43. Residue 124–130 (GTNGKTT) coordinates ATP. UDP-N-acetyl-alpha-D-muramoyl-L-alanyl-D-glutamate-binding positions include 166–167 (TT), S193, and R201. Position 233 is an N6-carboxylysine (K233). Meso-2,6-diaminopimelate contacts are provided by residues R404, 428-431 (DNPR), G478, and E482. A Meso-diaminopimelate recognition motif motif is present at residues 428-431 (DNPR).

It belongs to the MurCDEF family. MurE subfamily. Mg(2+) is required as a cofactor. Carboxylation is probably crucial for Mg(2+) binding and, consequently, for the gamma-phosphate positioning of ATP.

It localises to the cytoplasm. It catalyses the reaction UDP-N-acetyl-alpha-D-muramoyl-L-alanyl-D-glutamate + meso-2,6-diaminopimelate + ATP = UDP-N-acetyl-alpha-D-muramoyl-L-alanyl-gamma-D-glutamyl-meso-2,6-diaminopimelate + ADP + phosphate + H(+). The protein operates within cell wall biogenesis; peptidoglycan biosynthesis. In terms of biological role, catalyzes the addition of meso-diaminopimelic acid to the nucleotide precursor UDP-N-acetylmuramoyl-L-alanyl-D-glutamate (UMAG) in the biosynthesis of bacterial cell-wall peptidoglycan. The protein is UDP-N-acetylmuramoyl-L-alanyl-D-glutamate--2,6-diaminopimelate ligase of Chlorobaculum tepidum (strain ATCC 49652 / DSM 12025 / NBRC 103806 / TLS) (Chlorobium tepidum).